Reading from the N-terminus, the 218-residue chain is 3-isopropylmalate dehydratase small subunit (218 aa).

The protein belongs to the LeuD family. LeuD type 1 subfamily. Heterodimer of LeuC and LeuD.

It carries out the reaction (2R,3S)-3-isopropylmalate = (2S)-2-isopropylmalate. Its pathway is amino-acid biosynthesis; L-leucine biosynthesis; L-leucine from 3-methyl-2-oxobutanoate: step 2/4. Its function is as follows. Catalyzes the isomerization between 2-isopropylmalate and 3-isopropylmalate, via the formation of 2-isopropylmaleate. The protein is 3-isopropylmalate dehydratase small subunit of Alkalilimnicola ehrlichii (strain ATCC BAA-1101 / DSM 17681 / MLHE-1).